Consider the following 624-residue polypeptide: Chaperone protein HtpG (624 aa).

The tract at residues 1-336 is a; substrate-binding; that stretch reads MKGQETRGFQ…SSDLSLNVSR (336 aa). The interval 337–552 is b; that stretch reads EILQDSTVTR…ADEMSTQMAK (216 aa). A c region spans residues 553 to 624; that stretch reads LFAAAGQKVP…IRRMNQLLVS (72 aa).

The protein belongs to the heat shock protein 90 family. In terms of assembly, homodimer.

Its subcellular location is the cytoplasm. In terms of biological role, molecular chaperone. Has ATPase activity. The chain is Chaperone protein HtpG from Shigella dysenteriae serotype 1 (strain Sd197).